The following is a 308-amino-acid chain: Isoaspartyl peptidase/L-asparaginase (308 aa).

The residue at position 1 (methionine 1) is an N-acetylmethionine. Threonine 168 (nucleophile) is an active-site residue. Substrate-binding positions include 196–199 (RVGD) and 219–222 (TGHG).

The protein belongs to the Ntn-hydrolase family. In terms of assembly, heterodimer of an alpha and beta chain produced by autocleavage. This heterodimer may then dimerize in turn, giving rise to a heterotetramer. In terms of processing, cleaved into an alpha and beta chain by autocatalysis; this activates the enzyme. The N-terminal residue of the beta subunit is responsible for the nucleophile hydrolase activity.

The protein localises to the cytoplasm. The enzyme catalyses L-asparagine + H2O = L-aspartate + NH4(+). It catalyses the reaction Cleavage of a beta-linked Asp residue from the N-terminus of a polypeptide.. Its function is as follows. Has both L-asparaginase and beta-aspartyl peptidase activity. May be involved in the production of L-aspartate, which can act as an excitatory neurotransmitter in some brain regions. Is highly active with L-Asp beta-methyl ester. Besides, has catalytic activity toward beta-aspartyl dipeptides and their methyl esters, including beta-L-Asp-L-Phe, beta-L-Asp-L-Phe methyl ester (aspartame), beta-L-Asp-L-Ala, beta-L-Asp-L-Leu and beta-L-Asp-L-Lys. Does not have aspartylglucosaminidase activity and is inactive toward GlcNAc-L-Asn. Likewise, has no activity toward glutamine. In Bos taurus (Bovine), this protein is Isoaspartyl peptidase/L-asparaginase (ASRGL1).